Consider the following 187-residue polypeptide: UPF0301 protein YqgE (187 aa).

Belongs to the UPF0301 (AlgH) family.

The protein is UPF0301 protein YqgE of Shigella boydii serotype 4 (strain Sb227).